A 320-amino-acid chain; its full sequence is Cytochrome f (320 aa).

The first 35 residues, 1–35 (MQTRNTFSWIREEITRSISVSLMIYIITWASISSA), serve as a signal peptide directing secretion. The heme site is built by Tyr36, Cys56, Cys59, and His60. Residues 286–306 (VQGLLFFLGSVVLAQIFLVLK) form a helical membrane-spanning segment.

This sequence belongs to the cytochrome f family. As to quaternary structure, the 4 large subunits of the cytochrome b6-f complex are cytochrome b6, subunit IV (17 kDa polypeptide, petD), cytochrome f and the Rieske protein, while the 4 small subunits are PetG, PetL, PetM and PetN. The complex functions as a dimer. The cofactor is heme.

It localises to the plastid. Its subcellular location is the chloroplast thylakoid membrane. Component of the cytochrome b6-f complex, which mediates electron transfer between photosystem II (PSII) and photosystem I (PSI), cyclic electron flow around PSI, and state transitions. This chain is Cytochrome f, found in Barbarea verna (Land cress).